The primary structure comprises 161 residues: Nucleotide-binding protein mma_0840 (161 aa).

It belongs to the YajQ family.

Functionally, nucleotide-binding protein. This Janthinobacterium sp. (strain Marseille) (Minibacterium massiliensis) protein is Nucleotide-binding protein mma_0840.